The sequence spans 376 residues: Succinyl-diaminopimelate desuccinylase (376 aa).

Residue H66 participates in Zn(2+) binding. Residue D68 is part of the active site. D99 serves as a coordination point for Zn(2+). Catalysis depends on E133, which acts as the Proton acceptor. Residues E134, E162, and H348 each coordinate Zn(2+).

It belongs to the peptidase M20A family. DapE subfamily. As to quaternary structure, homodimer. The cofactor is Zn(2+). Co(2+) is required as a cofactor.

It carries out the reaction N-succinyl-(2S,6S)-2,6-diaminopimelate + H2O = (2S,6S)-2,6-diaminopimelate + succinate. It participates in amino-acid biosynthesis; L-lysine biosynthesis via DAP pathway; LL-2,6-diaminopimelate from (S)-tetrahydrodipicolinate (succinylase route): step 3/3. Functionally, catalyzes the hydrolysis of N-succinyl-L,L-diaminopimelic acid (SDAP), forming succinate and LL-2,6-diaminopimelate (DAP), an intermediate involved in the bacterial biosynthesis of lysine and meso-diaminopimelic acid, an essential component of bacterial cell walls. The chain is Succinyl-diaminopimelate desuccinylase from Nitrosococcus oceani (strain ATCC 19707 / BCRC 17464 / JCM 30415 / NCIMB 11848 / C-107).